Reading from the N-terminus, the 319-residue chain is Protein PR73 (319 aa).

The interval 1–39 (MPRLQQKWLNSRECPTPRGEAAKGLFPTKDDPSAHKRVS) is disordered. The Cytoplasmic portion of the chain corresponds to 1–44 (MPRLQQKWLNSRECPTPRGEAAKGLFPTKDDPSAHKRVSPSDKD). A compositionally biased stretch (basic and acidic residues) spans 28–39 (TKDDPSAHKRVS). The chain crosses the membrane as a helical span at residues 45-65 (IFILCCKLGIALLCLGLLGEV). Topologically, residues 66–319 (AVRARRALTL…AKTYGMSYYE (254 aa)) are extracellular. N79, N89, N93, N131, and N146 each carry an N-linked (GlcNAc...) asparagine; by host glycan.

Belongs to the mouse mammary tumor virus PR73 superantigen family.

It is found in the membrane. Functionally, superantigen. This Mus musculus (Mouse) protein is Protein PR73 (sag).